Reading from the N-terminus, the 416-residue chain is Serine hydroxymethyltransferase (416 aa).

(6S)-5,6,7,8-tetrahydrofolate is bound by residues Leu-117 and 121 to 123 (GHL). The residue at position 226 (Lys-226) is an N6-(pyridoxal phosphate)lysine.

This sequence belongs to the SHMT family. Homodimer. Pyridoxal 5'-phosphate is required as a cofactor.

It localises to the cytoplasm. The enzyme catalyses (6R)-5,10-methylene-5,6,7,8-tetrahydrofolate + glycine + H2O = (6S)-5,6,7,8-tetrahydrofolate + L-serine. Its pathway is one-carbon metabolism; tetrahydrofolate interconversion. The protein operates within amino-acid biosynthesis; glycine biosynthesis; glycine from L-serine: step 1/1. Catalyzes the reversible interconversion of serine and glycine with tetrahydrofolate (THF) serving as the one-carbon carrier. This reaction serves as the major source of one-carbon groups required for the biosynthesis of purines, thymidylate, methionine, and other important biomolecules. Also exhibits THF-independent aldolase activity toward beta-hydroxyamino acids, producing glycine and aldehydes, via a retro-aldol mechanism. This Leptospira biflexa serovar Patoc (strain Patoc 1 / Ames) protein is Serine hydroxymethyltransferase.